The following is a 239-amino-acid chain: UPF0173 metal-dependent hydrolase rrnAC0300 (239 aa).

This sequence belongs to the UPF0173 family.

The sequence is that of UPF0173 metal-dependent hydrolase rrnAC0300 from Haloarcula marismortui (strain ATCC 43049 / DSM 3752 / JCM 8966 / VKM B-1809) (Halobacterium marismortui).